Consider the following 208-residue polypeptide: Methenyltetrahydrofolate cyclohydrolase (208 aa).

The chain crosses the membrane as a helical span at residues 25-46 (GAAAISGAMGAALVSMVCNLTI).

Belongs to the cyclodeaminase/cyclohydrolase family. Homodimer.

The protein resides in the membrane. The catalysed reaction is (6R)-5,10-methenyltetrahydrofolate + H2O = (6R)-10-formyltetrahydrofolate + H(+). The protein operates within one-carbon metabolism; formaldehyde assimilation via serine pathway. Functionally, required for both C1 and C2 metabolism. This Methylorubrum extorquens (strain ATCC 14718 / DSM 1338 / JCM 2805 / NCIMB 9133 / AM1) (Methylobacterium extorquens) protein is Methenyltetrahydrofolate cyclohydrolase (fchA).